Consider the following 345-residue polypeptide: MASKQHAHILSLARSMIPPLHPKLHKGQAGRIGVLGGSGDYSGAPYFSSMGAMRFGADLAHVICEPSAGAVIKTYSPDLIVHTILDPQKSREDIRSALKGVMSRLHVLIIGPGLGRDDHMQSCAKIAFELAKDMEQMGVVVDADGLWLVQNEPKVVMDWPGVPRIILTPNVMEFKRLCDTMKINASGPHTSLCPQLATALGNATIIQKGPSDIISNGLKIPSALLSDESEEQNYLEVKVEGGLKRVGGQGDILSGSTGVLLAWGSEWVRGTYEHVGHPPPQDKAIAENIPVLAAYGASTFNRTVSKRGFQKKGRSMVTGDLVDMVGEVYEEVFGKPGEMEGRGKL.

One can recognise a YjeF C-terminal domain in the interval 9-332 (ILSLARSMIP…DMVGEVYEEV (324 aa)). Residues Gly-113 and 170–176 (NVMEFKR) each bind (6S)-NADPHX. ATP is bound by residues 208 to 212 (KGPSD) and 241 to 250 (GGLKRVGGQG). Asp-251 lines the (6S)-NADPHX pocket.

Belongs to the NnrD/CARKD family. The cofactor is Mg(2+).

It localises to the cytoplasm. The catalysed reaction is (6S)-NADHX + ATP = ADP + phosphate + NADH + H(+). The enzyme catalyses (6S)-NADPHX + ATP = ADP + phosphate + NADPH + H(+). Its function is as follows. Catalyzes the dehydration of the S-form of NAD(P)HX at the expense of ATP, which is converted to ADP. Together with NAD(P)HX epimerase, which catalyzes the epimerization of the S- and R-forms, the enzyme allows the repair of both epimers of NAD(P)HX, a damaged form of NAD(P)H that is a result of enzymatic or heat-dependent hydration. This Cryptococcus neoformans var. neoformans serotype D (strain JEC21 / ATCC MYA-565) (Filobasidiella neoformans) protein is ATP-dependent (S)-NAD(P)H-hydrate dehydratase.